The sequence spans 60 residues: MRCLPVIVILLLLISSAAAVVEGPLRVNRRLRPRKAPVDMQARDWNWGRCCFLSGCFECW.

Positions 1-19 (MRCLPVIVILLLLISSAAA) are cleaved as a signal peptide. The propeptide occupies 20-48 (VVEGPLRVNRRLRPRKAPVDMQARDWNWG).

Belongs to the conotoxin T superfamily. Contains 2 disulfide bonds. Expressed by the venom duct.

It is found in the secreted. In Californiconus californicus (California cone), this protein is Conotoxin Cl1.1.